The following is a 1042-amino-acid chain: Kinesin-like protein KIN-5A (1042 aa).

A compositionally biased stretch (low complexity) spans 1–14 (MDSNNSKKGSSVKS). The interval 1-45 (MDSNNSKKGSSVKSPCQTPRSTEKSNRDFRVDSNSNSNPVSKNEK) is disordered. Residues 21-31 (STEKSNRDFRV) show a composition bias toward basic and acidic residues. The span at 32-41 (DSNSNSNPVS) shows a compositional bias: polar residues. The 343-residue stretch at 50-392 (NIQVIVRCRP…LDYAHRAKHI (343 aa)) folds into the Kinesin motor domain. 136-143 (GQTGTGKT) provides a ligand contact to ATP. The stretch at 480–517 (TAGLREKLDKTEKKLYETEQALLDLEEKHRQAVATIKE) forms a coiled coil. Residues 1021-1042 (KQMQNGEAKHVSNGRPPLTAIN) are disordered.

It belongs to the TRAFAC class myosin-kinesin ATPase superfamily. Kinesin family. KIN-5/BimC subfamily.

Its subcellular location is the cytoplasm. It is found in the cytoskeleton. The protein resides in the spindle. Its function is as follows. Responsible for microtubule translocation. May be important for the organization of phragmoplast-specific arrays of microtubules. Plays an essential role in stabilizing the mitotic spindle. Required during mitotic cytokinesis. The sequence is that of Kinesin-like protein KIN-5A from Arabidopsis thaliana (Mouse-ear cress).